The following is a 251-amino-acid chain: uncharacterized protein (251 aa).

36 to 43 (GKQGTGKT) contacts ATP. Residues 230 to 251 (SDNKTENPSNPSLLTKIDDVTR) form a disordered region.

This protein may be involved in virus assembly. Essential for virus function. This is an uncharacterized protein from Sulfolobus spindle-shape virus 1 (SSV1).